The following is a 246-amino-acid chain: Bis(5'-nucleosyl)-tetraphosphatase PrpE [asymmetrical] (246 aa).

Belongs to the PrpE family. Ni(2+) serves as cofactor.

It carries out the reaction P(1),P(4)-bis(5'-guanosyl) tetraphosphate + H2O = GMP + GTP + 2 H(+). Its function is as follows. Asymmetrically hydrolyzes Ap4p to yield AMP and ATP. This is Bis(5'-nucleosyl)-tetraphosphatase PrpE [asymmetrical] from Bacillus cereus (strain ATCC 14579 / DSM 31 / CCUG 7414 / JCM 2152 / NBRC 15305 / NCIMB 9373 / NCTC 2599 / NRRL B-3711).